The sequence spans 417 residues: MQQVITQTLVDDRFIQISDSKKSEGLATDSTKRQSQEQPIHDKDPIKAATAAMATTPLVKEHQDTWYYPPDIANDLQSINLPAELKGEIFACAWEYTRCVIPNYTNWNRYVAFMRIIIMGIIAEFRGEMVDVTASNNLLGYDLDATLAALFEGTPGHKEMAREYKTFLLITADKASERRDGELFRRYVNALAQSPRHWFRMRDCDALARFTIASALACNDLDDIWFTEDQFEILTEIGDTLYDAVAFYKHRAEGETNSTFAYMPEDLRIKAYSECREILWALDAAWARNPKLANVINFVRFFGGPIHMMMRRYRFVEENLTIGKSETDKVVDQTRKNFKLWNRVDANKRSVLNTQRYKALIARSEELMFPGLAEFLEMGGDGICDKCKYRESTVQNCHTSLVVLNYAANADYRGEST.

Belongs to the alpha-ionylideneethane synthase family.

It functions in the pathway hormone biosynthesis. Functionally, alpha-ionylideneethane synthase; part of the gene cluster that mediates the biosynthesis of abscisic acid (ABA), a phytohormone that acts antagonistically toward salicylic acid (SA), jasmonic acid (JA) and ethylene (ETH) signaling, to impede plant defense responses. The first step of the pathway catalyzes the reaction from farnesyl diphosphate to alpha-ionylideneethane performed by the alpha-ionylideneethane synthase aba3 via a three-step reaction mechanism involving 2 neutral intermediates, beta-farnesene and allofarnesene. The cytochrome P450 monooxygenase aba1 might then be involved in the conversion of alpha-ionylideneethane to alpha-ionylideneacetic acid. Alpha-ionylideneacetic acid is further converted to abscisic acid in 2 steps involving the cytochrome P450 monooxygenase aba2 and the short-chain dehydrogenase/reductase aba4, via the intermediates 1'-deoxy-ABA or 1',4'-trans-diol-ABA, depending on the order of action of these 2 enzymes. Aba2 is responsible for the hydroxylation of carbon atom C-1' and aba4 might be involved in the oxidation of the C-4' carbon atom. This chain is Alpha-ionylideneethane synthase aba3, found in Botryotinia fuckeliana (Noble rot fungus).